The sequence spans 338 residues: Holliday junction branch migration complex subunit RuvB (338 aa).

Residues 1–181 are large ATPase domain (RuvB-L); the sequence is MTRTITPSIT…FGVISRLEFY (181 aa). ATP-binding positions include L20, R21, G62, K65, T66, T67, 128–130, R171, Y181, and R218; that span reads EDF. Mg(2+) is bound at residue T66. The interval 182–252 is small ATPAse domain (RuvB-S); it reads TDEELAFIIT…VVQDALALLE (71 aa). The segment at 255–338 is head domain (RuvB-H); that stretch reads EMGFDQMDRM…VPEPPQGKLF (84 aa). 2 residues coordinate DNA: R310 and R315.

This sequence belongs to the RuvB family. Homohexamer. Forms an RuvA(8)-RuvB(12)-Holliday junction (HJ) complex. HJ DNA is sandwiched between 2 RuvA tetramers; dsDNA enters through RuvA and exits via RuvB. An RuvB hexamer assembles on each DNA strand where it exits the tetramer. Each RuvB hexamer is contacted by two RuvA subunits (via domain III) on 2 adjacent RuvB subunits; this complex drives branch migration. In the full resolvosome a probable DNA-RuvA(4)-RuvB(12)-RuvC(2) complex forms which resolves the HJ.

Its subcellular location is the cytoplasm. The catalysed reaction is ATP + H2O = ADP + phosphate + H(+). Its function is as follows. The RuvA-RuvB-RuvC complex processes Holliday junction (HJ) DNA during genetic recombination and DNA repair, while the RuvA-RuvB complex plays an important role in the rescue of blocked DNA replication forks via replication fork reversal (RFR). RuvA specifically binds to HJ cruciform DNA, conferring on it an open structure. The RuvB hexamer acts as an ATP-dependent pump, pulling dsDNA into and through the RuvAB complex. RuvB forms 2 homohexamers on either side of HJ DNA bound by 1 or 2 RuvA tetramers; 4 subunits per hexamer contact DNA at a time. Coordinated motions by a converter formed by DNA-disengaged RuvB subunits stimulates ATP hydrolysis and nucleotide exchange. Immobilization of the converter enables RuvB to convert the ATP-contained energy into a lever motion, pulling 2 nucleotides of DNA out of the RuvA tetramer per ATP hydrolyzed, thus driving DNA branch migration. The RuvB motors rotate together with the DNA substrate, which together with the progressing nucleotide cycle form the mechanistic basis for DNA recombination by continuous HJ branch migration. Branch migration allows RuvC to scan DNA until it finds its consensus sequence, where it cleaves and resolves cruciform DNA. This is Holliday junction branch migration complex subunit RuvB from Geotalea uraniireducens (strain Rf4) (Geobacter uraniireducens).